The chain runs to 752 residues: Translation initiation factor IF-2 (752 aa).

The disordered stretch occupies residues 26 to 167 (RQGMGVKSHM…QPTQRKDKPL (142 aa)). Residues 34-47 (HMSSVTPDQAQQLR) are compositionally biased toward polar residues. Residues 72-81 (KQNNHQAQNH) are compositionally biased toward low complexity. Residues 83–96 (QHHDHDKTQNERPQ) show a composition bias toward basic and acidic residues. The span at 101–129 (SRSNNGTKDNNQHQNNGGRFGGSLNNDQG) shows a compositional bias: polar residues. The segment covering 131-150 (NGKRFNKKNKKNKKHNKNKR) has biased composition (basic residues). Residues 151-167 (LREVAHKQPTQRKDKPL) show a composition bias toward basic and acidic residues. In terms of domain architecture, tr-type G spans 253–422 (TRPAVVTVMG…LLQAEMLELK (170 aa)). The tract at residues 262-269 (GHVDHGKT) is G1. Residue 262–269 (GHVDHGKT) participates in GTP binding. The segment at 287–291 (GITQE) is G2. The segment at 308–311 (DTPG) is G3. GTP-binding positions include 308–312 (DTPGH) and 362–365 (NKID). Positions 362 to 365 (NKID) are G4. Positions 398 to 400 (SAK) are G5.

This sequence belongs to the TRAFAC class translation factor GTPase superfamily. Classic translation factor GTPase family. IF-2 subfamily.

The protein localises to the cytoplasm. Functionally, one of the essential components for the initiation of protein synthesis. Protects formylmethionyl-tRNA from spontaneous hydrolysis and promotes its binding to the 30S ribosomal subunits. Also involved in the hydrolysis of GTP during the formation of the 70S ribosomal complex. This Limosilactobacillus reuteri (strain DSM 20016) (Lactobacillus reuteri) protein is Translation initiation factor IF-2.